Here is a 549-residue protein sequence, read N- to C-terminus: 4-hydroxybutyrate--CoA ligase 2 (549 aa).

ATP-binding positions include 195–203, 336–341, Asp-425, and Arg-440; these read TSGTTGLPK and ETYGPH. CoA is bound by residues 448 to 450, Lys-506, and 514 to 516; these read GGE and CPK. Lys-530 provides a ligand contact to ATP.

It belongs to the ATP-dependent AMP-binding enzyme family. Mg(2+) serves as cofactor. Mn(2+) is required as a cofactor.

It catalyses the reaction 4-hydroxybutanoate + ATP + CoA = 4-hydroxybutanoyl-CoA + AMP + diphosphate. It carries out the reaction acetate + ATP + CoA = acetyl-CoA + AMP + diphosphate. The catalysed reaction is propanoate + ATP + CoA = propanoyl-CoA + AMP + diphosphate. The enzyme catalyses a medium-chain fatty acid + ATP + CoA = a medium-chain fatty acyl-CoA + AMP + diphosphate. In terms of biological role, catalyzes the ligation of coenzyme A (CoA) to 4-hydroxybutyrate (4HB). It can also use butyrate, valerate, propionate, acetate and 3-hydroxybutyrate (3HB) as substrates. This is 4-hydroxybutyrate--CoA ligase 2 from Metallosphaera sedula (strain ATCC 51363 / DSM 5348 / JCM 9185 / NBRC 15509 / TH2).